A 121-amino-acid polypeptide reads, in one-letter code: Putative RNase MJ1216 (121 aa).

Residues R76 and H81 contribute to the active site. The RX(4)HXY motif signature appears at 76 to 83; the sequence is RDKLIHQY. An O-di-AMP-tyrosine modification is found at Y83.

This sequence belongs to the HepT RNase toxin family. As to quaternary structure, homodimer, probably forms a complex with antitoxin MJ1215 or MJ1217. Modified by antitoxin MJ1215 or MJ1217; probably at least 2 successive AMPylation events occur on Tyr-83.

In terms of biological role, probable toxic component of a putative type VII toxin-antitoxin (TA) system, probably an RNase. Probably neutralized by antitoxin MJ1215 or MJ1217. Neutralization may be due to AMPylation by antitoxin. This is Putative RNase MJ1216 from Methanocaldococcus jannaschii (strain ATCC 43067 / DSM 2661 / JAL-1 / JCM 10045 / NBRC 100440) (Methanococcus jannaschii).